The primary structure comprises 279 residues: Bis(5'-nucleosyl)-tetraphosphatase, symmetrical (279 aa).

It belongs to the Ap4A hydrolase family.

It catalyses the reaction P(1),P(4)-bis(5'-adenosyl) tetraphosphate + H2O = 2 ADP + 2 H(+). Hydrolyzes diadenosine 5',5'''-P1,P4-tetraphosphate to yield ADP. This chain is Bis(5'-nucleosyl)-tetraphosphatase, symmetrical, found in Edwardsiella ictaluri (strain 93-146).